Reading from the N-terminus, the 182-residue chain is Mid1-interacting protein 1 (182 aa).

Met1 bears the N-acetylmethionine mark. A disordered region spans residues 55-75 (VGGSGGCLEERTTPAPSPGSA). Phosphoserine occurs at positions 71, 74, and 78.

Belongs to the SPOT14 family. Homodimer in the absence of THRSP. Heterodimer with THRSP. The homodimer interacts with ACACA and ACACB. Promotes polymerization of Acetyl-CoA carboxylase to form complexes that contain MID1IP1 and ACACA and/or ACACB. Interaction with THRSP interferes with ACACA binding. During embryonic development, expressed mainly in the neuroepithelial midline, urogenital apparatus and digits. Detected in adult white fat, liver, heart, brain and kidney. Expressed at very low levels in lactating mammary gland.

Its subcellular location is the nucleus. It is found in the cytoplasm. The protein localises to the cytoskeleton. Its function is as follows. Plays a role in the regulation of lipogenesis in liver. Up-regulates ACACA enzyme activity. Required for efficient lipid biosynthesis, including triacylglycerol, diacylglycerol and phospholipid. Involved in stabilization of microtubules. In Mus musculus (Mouse), this protein is Mid1-interacting protein 1 (Mid1ip1).